Consider the following 402-residue polypeptide: Oligopeptide transport ATP-binding protein OppD (402 aa).

One can recognise an ABC transporter domain in the interval 22 to 309 (LDITDLHVNF…PLHPYTWALI (288 aa)). Position 58 to 65 (58 to 65 (GESGSGKS)) interacts with ATP.

Belongs to the ABC transporter superfamily. The complex is composed of two ATP-binding proteins (OppD and OppF), two transmembrane proteins (OppB and OppC) and a solute-binding protein (OppA).

The protein localises to the cell membrane. It carries out the reaction a [peptide](out) + ATP + H2O = a [peptide](in) + ADP + phosphate + H(+). Functionally, part of the ABC transporter complex OppABCDF involved in the uptake of oligopeptides. Probably responsible for energy coupling to the transport system. The protein is Oligopeptide transport ATP-binding protein OppD (oppD) of Mycoplasma genitalium (strain ATCC 33530 / DSM 19775 / NCTC 10195 / G37) (Mycoplasmoides genitalium).